We begin with the raw amino-acid sequence, 335 residues long: Transcriptional activator NphR (335 aa).

The region spanning 231-329 (TRVQRVIEQN…GSSPGLYRKE (99 aa)) is the HTH araC/xylS-type domain. 2 DNA-binding regions (H-T-H motif) span residues 249 to 270 (SDIAAAAGMSLRTVHKLFNAEG) and 296 to 319 (VADVSECAGFRDVSHFSRLFRSTF).

Transcriptional activator of nphA1 and nphA2 involved in the degradation of 4-nitrophenol (4-NP). The protein is Transcriptional activator NphR (nphR) of Rhodococcus sp.